The following is a 489-amino-acid chain: Argininosuccinate lyase (489 aa).

The tract at residues 462-489 is disordered; that stretch reads QARYQQTEPAEEPPLPPSSPGSGLPLES.

It belongs to the lyase 1 family. Argininosuccinate lyase subfamily.

The protein resides in the cytoplasm. The catalysed reaction is 2-(N(omega)-L-arginino)succinate = fumarate + L-arginine. It functions in the pathway amino-acid biosynthesis; L-arginine biosynthesis; L-arginine from L-ornithine and carbamoyl phosphate: step 3/3. This Synechococcus sp. (strain JA-3-3Ab) (Cyanobacteria bacterium Yellowstone A-Prime) protein is Argininosuccinate lyase.